The following is a 333-amino-acid chain: GTPase Obg (333 aa).

The Obg domain maps to 1–159 (MKFIDQTIIQ…RDIQLELILI (159 aa)). The OBG-type G domain occupies 160–332 (ADVGTLGMPN…LCSDIAFYLQ (173 aa)). GTP-binding positions include 166-173 (GMPNAGKS), 191-195 (FTTLN), 212-215 (DIPG), 282-285 (NKID), and 313-315 (SSI). Mg(2+)-binding residues include Ser173 and Thr193.

The protein belongs to the TRAFAC class OBG-HflX-like GTPase superfamily. OBG GTPase family. In terms of assembly, monomer. The cofactor is Mg(2+).

It localises to the cytoplasm. In terms of biological role, an essential GTPase which binds GTP, GDP and possibly (p)ppGpp with moderate affinity, with high nucleotide exchange rates and a fairly low GTP hydrolysis rate. Plays a role in control of the cell cycle, stress response, ribosome biogenesis and in those bacteria that undergo differentiation, in morphogenesis control. This is GTPase Obg from Buchnera aphidicola subsp. Schizaphis graminum (strain Sg).